A 190-amino-acid chain; its full sequence is GTP cyclohydrolase 1 (190 aa).

Zn(2+) is bound by residues cysteine 75, histidine 78, and cysteine 146.

This sequence belongs to the GTP cyclohydrolase I family. In terms of assembly, toroid-shaped homodecamer, composed of two pentamers of five dimers.

The catalysed reaction is GTP + H2O = 7,8-dihydroneopterin 3'-triphosphate + formate + H(+). It participates in cofactor biosynthesis; 7,8-dihydroneopterin triphosphate biosynthesis; 7,8-dihydroneopterin triphosphate from GTP: step 1/1. The chain is GTP cyclohydrolase 1 from Campylobacter jejuni subsp. doylei (strain ATCC BAA-1458 / RM4099 / 269.97).